We begin with the raw amino-acid sequence, 986 residues long: Mediator of RNA polymerase II transcription subunit 24 (986 aa).

6 short sequence motifs (LXXLL motif) span residues 128–132, 341–345, 445–449, 554–558, 785–789, and 855–859; these read LNWLL, LTPLL, LDLLL, LVALL, LPNLL, and LMRLL.

Belongs to the Mediator complex subunit 24 family. As to quaternary structure, component of the Mediator complex.

Its subcellular location is the nucleus. Its function is as follows. Component of the Mediator complex, a coactivator involved in the regulated transcription of nearly all RNA polymerase II-dependent genes. Mediator functions as a bridge to convey information from gene-specific regulatory proteins to the basal RNA polymerase II transcription machinery. Mediator is recruited to promoters by direct interactions with regulatory proteins and serves as a scaffold for the assembly of a functional preinitiation complex with RNA polymerase II and the general transcription factors. The sequence is that of Mediator of RNA polymerase II transcription subunit 24 (MED24) from Gallus gallus (Chicken).